The following is a 129-amino-acid chain: Cytochrome c-type protein SHP (129 aa).

A signal peptide spans 1 to 17 (MTRFLILSAVLAGPALA). Cysteine 60, cysteine 63, and histidine 64 together coordinate heme c. Cysteine 106 and cysteine 114 are oxidised to a cystine.

In terms of processing, binds 1 heme c group covalently per subunit.

High-spin cytochrome. Transiently bind oxygen during autoxidation, which occurs with a half-life of 3 minutes with a 4-fold excess of O(2). Also binds carbon monoxide, azide and cyanide. This chain is Cytochrome c-type protein SHP (shp), found in Cereibacter sphaeroides (strain ATCC 17023 / DSM 158 / JCM 6121 / CCUG 31486 / LMG 2827 / NBRC 12203 / NCIMB 8253 / ATH 2.4.1.) (Rhodobacter sphaeroides).